A 139-amino-acid chain; its full sequence is Large ribosomal subunit protein uL16 (139 aa).

Residues 1–21 are compositionally biased toward basic residues; the sequence is MLSPRKTKFRKQHRGRMRGKA. Residues 1-23 form a disordered region; the sequence is MLSPRKTKFRKQHRGRMRGKATR.

It belongs to the universal ribosomal protein uL16 family. In terms of assembly, part of the 50S ribosomal subunit.

Functionally, binds 23S rRNA and is also seen to make contacts with the A and possibly P site tRNAs. This Acaryochloris marina (strain MBIC 11017) protein is Large ribosomal subunit protein uL16.